We begin with the raw amino-acid sequence, 268 residues long: uncharacterized protein (268 aa).

The chain crosses the membrane as a helical span at residues 150–172 (LYSIADFLAYTFTYFYLATVGLA).

It is found in the host membrane. This is an uncharacterized protein from Sulfolobus islandicus rod-shaped virus 1 (SIRV-1).